The sequence spans 560 residues: Involucrin (560 aa).

Residues Met1 to Leu15 are compositionally biased toward polar residues. Disordered stretches follow at residues Met1–Asp131, Glu150–Gln359, and Gly404–Leu534. The segment covering Glu76–His91 has biased composition (low complexity). 2 stretches are compositionally biased toward basic and acidic residues: residues Trp92–Arg115 and Gln159–Gln172. Residues Gln189–Gly211 are compositionally biased toward low complexity. 3 stretches are compositionally biased toward basic and acidic residues: residues Gln212–Gly231, Gln252–Glu264, and Lys274–Glu320. Residues Gly321 to Lys334 show a composition bias toward low complexity. Composition is skewed to basic and acidic residues over residues Gln335–Leu353, Gly404–Glu420, Gln454–Ala463, Lys476–Glu486, and Gln494–Gln510.

The protein belongs to the involucrin family. In terms of assembly, directly or indirectly cross-linked to cornifelin (CNFN). In terms of processing, substrate of transglutaminase. Specific glutamines or lysines are cross-linked to keratins, desmoplakin and to inter involucrin molecules. Keratinocytes of epidermis and other stratified squamous epithelia.

It localises to the cytoplasm. Functionally, part of the insoluble cornified cell envelope (CE) of stratified squamous epithelia. This chain is Involucrin (IVL), found in Pan paniscus (Pygmy chimpanzee).